The primary structure comprises 172 residues: Lipopolysaccharide export system protein LptA (172 aa).

The signal sequence occupies residues 1–23 (MKLVSNKILFLATMVLASSSAFA).

The protein belongs to the LptA family. In terms of assembly, component of the lipopolysaccharide transport and assembly complex.

It localises to the periplasm. In terms of biological role, involved in the assembly of lipopolysaccharide (LPS). Required for the translocation of LPS from the inner membrane to the outer membrane. May form a bridge between the inner membrane and the outer membrane, via interactions with LptC and LptD, thereby facilitating LPS transfer across the periplasm. In Haemophilus influenzae (strain ATCC 51907 / DSM 11121 / KW20 / Rd), this protein is Lipopolysaccharide export system protein LptA.